The primary structure comprises 53 residues: Snake venom serine protease LmrSP-4 (53 aa).

A disulfide bridge links cysteine 26 with cysteine 42. Histidine 41 (charge relay system) is an active-site residue.

As to quaternary structure, monomer. N-glycosylated. As to expression, expressed by the venom gland.

It localises to the secreted. Its activity is regulated as follows. Inhibited by the small molecule serine protease inhibitors phenylmethylsulfonyl fluoride (PMSF) and benzamidine. Snake venom serine protease that has fibrinogenolytic activity. Hydrolyzes the alpha-chain of fibrinogen (FGA), without affecting the beta- and the gamma-chains. Also displays hydrolytic activity towards S-2302 (plasma kallikrein substrate) and S-2251 (substrate for plasmin), but has no hydrolytic activity with S-2238 (thrombin substrate) or S-2222 (factor Xa). The sequence is that of Snake venom serine protease LmrSP-4 from Lachesis muta rhombeata (Bushmaster).